The primary structure comprises 415 residues: MAGPNQLCIRRWTTKHVAVWLKDEGFFEYVDILCNKHRLDGITLLTLTEYDLRSPPLEIKVLGDIKRLMLSVRKLQKIHIDVLEEMGYNSDSPMGSMTPFISALQSTDWLCNGELSHDCDGPITDLNSDQYQYMNGKNKHSVRRLDPEYWKTILSCIYVFIVFGFTSFIMVIVHERVPDMQTYPPLPDIFLDSVPRIPWAFAMTEVCGMILCYIWLLVLLLHKHRSILLRRLCSLMGTVFLLRCFTMFVTSLSVPGQHLQCTGKIYGSVWEKLHRAFAIWSGFGMTLTGVHTCGDYMFSGHTVVLTMLNFFVTEYTPRSWNFLHTLSWVLNLFGIFFILAAHEHYSIDVFIAFYITTRLFLYYHTLANTRAYQQSRRARIWFPMFSFFECNVNGTVPNEYCWPFSKPAIMKRLIG.

An SAM domain is found at 12 to 78 (WTTKHVAVWL…MLSVRKLQKI (67 aa)). The next 4 helical transmembrane spans lie at 153–173 (ILSCIYVFIVFGFTSFIMVIV), 201–221 (FAMTEVCGMILCYIWLLVLLL), 232–252 (LCSLMGTVFLLRCFTMFVTSL), and 277–297 (FAIWSGFGMTLTGVHTCGDYM). His301 is an active-site residue. A helical transmembrane segment spans residues 322-342 (FLHTLSWVLNLFGIFFILAAH). Residues His344 and Asp348 contribute to the active site. The chain crosses the membrane as a helical span at residues 347 to 367 (IDVFIAFYITTRLFLYYHTLA). Residues 368–415 (NTRAYQQSRRARIWFPMFSFFECNVNGTVPNEYCWPFSKPAIMKRLIG) are Cytoplasmic-facing.

The protein belongs to the sphingomyelin synthase family.

Its subcellular location is the endoplasmic reticulum membrane. It carries out the reaction an N-acylsphing-4-enine + a 1,2-diacyl-sn-glycero-3-phosphoethanolamine = an N-acylsphing-4-enine 1-phosphoethanolamine + a 1,2-diacyl-sn-glycerol. The enzyme catalyses an N-acylsphinganine + a 1,2-diacyl-sn-glycero-3-phosphoethanolamine = an N-acylsphinganine-1-phosphoethanolamine + a 1,2-diacyl-sn-glycerol. It catalyses the reaction an N-acyl-(4R)-4-hydroxysphinganine + a 1,2-diacyl-sn-glycero-3-phosphoethanolamine = an N-acyl-(4R)-4-hydroxysphinganine-1-phosphoethanolamine + a 1,2-diacyl-sn-glycerol. The catalysed reaction is N-hexadecanoylsphinganine + a 1,2-diacyl-sn-glycero-3-phosphoethanolamine = N-hexadecanoyl-sphinganine-1-phosphoethanolamine + a 1,2-diacyl-sn-glycerol. It carries out the reaction N-hexadecanoyl-(4R)-hydroxysphinganine + a 1,2-diacyl-sn-glycero-3-phosphoethanolamine = N-hexadecanoyl-(4R)-hydroxysphinganine-1-phosphoethanolamine + a 1,2-diacyl-sn-glycerol. Its pathway is sphingolipid metabolism. Its function is as follows. Synthesizes sphingolipids through transfer of a phosphatidyl head group from a glycerophospholipid on to the primary hydroxyl of a ceramide in the lumen of the endoplasmic reticulum. Catalyzes the synthesis of ceramide phosphoethanolamines (CPEs) (such as N-acylsphing-4-enine 1-phosphoethanolamine) by transferring phosphoethanolamine head group, which is smaller and more hydrophilic than the phosphocholine (PC) headgroup transferred in the canonical sphingomyelin synthesis (SMS) reaction by SMS1 or SMS2, from a phosphatidylethanolamine (1,2-diacyl-sn-glycero-3-phosphoethanolamine, PE) to a ceramide (such as N-acylsphing-4-enine). The larger PC prevents an efficient fit in the enzyme's catalytic pocket, leading to little or no SMS activity. In vitro, in the absence of ceramide, it has PLC activity with preference for phosphatidylinositol and phosphatidic acid, but also hydrolyzes phosphatidylethanolamine. This Homo sapiens (Human) protein is Sphingomyelin synthase-related protein 1.